The chain runs to 335 residues: Large ribosomal subunit protein uL10 (335 aa).

The tract at residues 306-335 (VEETVEEEEEEEEEEDAEEEAAAGLGALFG) is disordered. The segment covering 308–326 (ETVEEEEEEEEEEDAEEEA) has biased composition (acidic residues).

The protein belongs to the universal ribosomal protein uL10 family. As to quaternary structure, part of the 50S ribosomal subunit. Forms part of the ribosomal stalk which helps the ribosome interact with GTP-bound translation factors. Forms a heptameric L10(L12)2(L12)2(L12)2 complex, where L10 forms an elongated spine to which the L12 dimers bind in a sequential fashion.

Its function is as follows. Forms part of the ribosomal stalk, playing a central role in the interaction of the ribosome with GTP-bound translation factors. In Methanobrevibacter smithii (strain ATCC 35061 / DSM 861 / OCM 144 / PS), this protein is Large ribosomal subunit protein uL10.